The primary structure comprises 240 residues: tRNA (guanine-N(1)-)-methyltransferase (240 aa).

S-adenosyl-L-methionine is bound by residues Gly-110 and 129–134 (LGDFVL).

It belongs to the RNA methyltransferase TrmD family. Homodimer.

The protein localises to the cytoplasm. The catalysed reaction is guanosine(37) in tRNA + S-adenosyl-L-methionine = N(1)-methylguanosine(37) in tRNA + S-adenosyl-L-homocysteine + H(+). Its function is as follows. Specifically methylates guanosine-37 in various tRNAs. The protein is tRNA (guanine-N(1)-)-methyltransferase of Clostridium botulinum (strain Kyoto / Type A2).